We begin with the raw amino-acid sequence, 145 residues long: Deoxyuridine 5'-triphosphate nucleotidohydrolase (145 aa).

Residues 62–64, Asn75, 79–81, and Lys89 contribute to the substrate site; these read RSG and TVD.

It belongs to the dUTPase family. Requires Mg(2+) as cofactor.

It catalyses the reaction dUTP + H2O = dUMP + diphosphate + H(+). The protein operates within pyrimidine metabolism; dUMP biosynthesis; dUMP from dCTP (dUTP route): step 2/2. This enzyme is involved in nucleotide metabolism: it produces dUMP, the immediate precursor of thymidine nucleotides and it decreases the intracellular concentration of dUTP so that uracil cannot be incorporated into DNA. The polypeptide is Deoxyuridine 5'-triphosphate nucleotidohydrolase (Helicobacter pylori (strain ATCC 700392 / 26695) (Campylobacter pylori)).